The following is a 511-amino-acid chain: Sporulation-specific chitinase 2 (511 aa).

Residues 1–34 form the signal peptide; it reads MVGHSAQHRSKSSLVSHLLILLIFITIIIEMCLY. The region spanning 73-472 is the GH18 domain; it reads FISGVYYSNW…NAFNEGLHFN (400 aa). N147 carries N-linked (GlcNAc...) asparagine glycosylation. E223 (proton donor) is an active-site residue. N228, N456, and N472 each carry an N-linked (GlcNAc...) asparagine glycan.

The protein belongs to the glycosyl hydrolase 18 family. Chitinase class III subfamily.

It localises to the secreted. It carries out the reaction Random endo-hydrolysis of N-acetyl-beta-D-glucosaminide (1-&gt;4)-beta-linkages in chitin and chitodextrins.. This chain is Sporulation-specific chitinase 2 (CTS2), found in Saccharomyces cerevisiae (strain ATCC 204508 / S288c) (Baker's yeast).